Consider the following 974-residue polypeptide: Probable proton ATPase 1B (974 aa).

Positions 1–23 are enriched in basic and acidic residues; the sequence is MSSKKYELDAAAFEDKPESHSDA. Positions 1 to 61 are disordered; the sequence is MSSKKYELDA…ATDLLPPSKG (61 aa). The next 4 membrane-spanning stretches (helical) occupy residues 93-112, 118-137, 265-286, and 295-321; these read GLWGPMPAALWIAIIIEFAL, GAILFAIQIANATIGWYETI, VMLALCAISFILCMCCFIYLLA, and ALQFAVVVLVVSIPIALEIVVTTTLAV. Catalysis depends on aspartate 351, which acts as the 4-aspartylphosphate intermediate. The next 6 membrane-spanning stretches (helical) occupy residues 631–651, 662–684, 698–712, 738–761, 813–840, and 869–887; these read AAADMVLTEPGLSVVVEAMLV, FLTYRISATLQLVCFFFIACFSL, FFHLPVLMFMLITLL, VVFVSASILAAVACGSSLMLLWIG, FFFYVPPSPILFCGAIISLLVSTMAASF, and VWIYCIVWWFVQDVVKVLA. Residues 952–974 form a disordered region; it reads REDTHVLNESTSPVNAFSPKVKK.

The protein belongs to the cation transport ATPase (P-type) (TC 3.A.3) family. Type IIIA subfamily.

Its subcellular location is the membrane. The enzyme catalyses ATP + H2O + H(+)(in) = ADP + phosphate + 2 H(+)(out). This Leishmania donovani protein is Probable proton ATPase 1B (H1B).